We begin with the raw amino-acid sequence, 59 residues long: UPF0434 protein lpg1920 (59 aa).

The protein belongs to the UPF0434 family.

The protein is UPF0434 protein lpg1920 of Legionella pneumophila subsp. pneumophila (strain Philadelphia 1 / ATCC 33152 / DSM 7513).